A 925-amino-acid chain; its full sequence is Colossin-D (925 aa).

A signal peptide spans 1 to 26 (MIKVFKDLKFLILITIILLNLKSINC). 11 N-linked (GlcNAc...) asparagine glycosylation sites follow: Asn47, Asn95, Asn142, Asn166, Asn283, Asn334, Asn344, Asn378, Asn401, Asn511, and Asn642.

It belongs to the serine-aspartate repeat-containing protein (SDr) family.

The protein resides in the secreted. The protein is Colossin-D (colD) of Dictyostelium discoideum (Social amoeba).